A 377-amino-acid polypeptide reads, in one-letter code: Probable staphylococcal-like nuclease CAN3 (377 aa).

G2 carries the N-myristoyl glycine lipid modification. C7 is lipidated: S-palmitoyl cysteine. The interval 15–57 (GDHYPYYKPTSRPHYQPPHYHGQPAAPPAPPQQQPLGPHGVTP) is disordered. Over residues 27-38 (PHYQPPHYHGQP) the composition is skewed to low complexity. Residues 177-353 (NTLPVYDKCI…KAANRGLWAS (177 aa)) enclose the TNase-like domain. D190 provides a ligand contact to Ca(2+). R260 is an active-site residue. Residue D265 participates in Ca(2+) binding. Residues E268 and R302 contribute to the active site.

It belongs to the thermonuclease family. The cofactor is Ca(2+).

The protein localises to the cell membrane. Enzyme that catalyzes the hydrolysis of both DNA and RNA at the 5' position of the phosphodiester bond. The protein is Probable staphylococcal-like nuclease CAN3 of Oryza sativa subsp. japonica (Rice).